A 260-amino-acid chain; its full sequence is Ras-related protein Rab-26 (260 aa).

The tract at residues 1–56 (MSRKKTPKSKGGSEPATSTLPAAAAATNGPRLAHPRTVRPGPEAPPNGPPQSIRPS) is disordered. GTP is bound by residues S76, G77, V78, G79, K80, T81, C82, S99, and T100. Residue T81 participates in Mg(2+) binding. 2 short sequence motifs (switch) span residues 90–105 (GAFLAGTFISTVGIDF) and 123–140 (DTAGQERFRSVTHAYYRD). Residues T100 and D123 each contribute to the Mg(2+) site. Positions 126, 181, 182, 184, 212, and 213 each coordinate GTP. 2 S-geranylgeranyl cysteine lipidation sites follow: C257 and C258.

It belongs to the small GTPase superfamily. Rab family. As to quaternary structure, interacts with ADRA2B. Interacts with RIMS1. It depends on Mg(2+) as a cofactor. In terms of tissue distribution, detected in zymogenic cells in the stomach.

It is found in the cytoplasmic vesicle. The protein resides in the secretory vesicle membrane. It localises to the golgi apparatus membrane. The catalysed reaction is GTP + H2O = GDP + phosphate + H(+). Its activity is regulated as follows. Regulated by guanine nucleotide exchange factors (GEFs) which promote the exchange of bound GDP for free GTP. Regulated by GTPase activating proteins (GAPs) which increase the GTP hydrolysis activity. Inhibited by GDP dissociation inhibitors (GDIs). Functionally, the small GTPases Rab are key regulators of intracellular membrane trafficking, from the formation of transport vesicles to their fusion with membranes. Rabs cycle between an inactive GDP-bound form and an active GTP-bound form that is able to recruit to membranes different set of downstream effectors directly responsible for vesicle formation, movement, tethering and fusion. RAB26 mediates transport of ADRA2A and ADRA2B from the Golgi to the cell membrane. Plays a role in the maturation of zymogenic granules and in pepsinogen secretion in the stomach. Plays a role in the secretion of amylase from acinar granules in the parotid gland. The sequence is that of Ras-related protein Rab-26 from Mus musculus (Mouse).